A 230-amino-acid chain; its full sequence is Oxygen-evolving enhancer protein 3-2, chloroplastic (230 aa).

The transit peptide at 1–49 (MAQAVTSMAGLRGASQAVLEGSLQINGSNRLNISRVSVGSQRTGLVIRA) directs the protein to the chloroplast. Residues 50 to 82 (QQNVSVPESSRRSVIGLVAAGLAGGSFVKAVFA) constitute a thylakoid transit peptide. A Phosphoserine modification is found at Ser-125. Thr-195 is modified (phosphothreonine). Residue Tyr-215 is modified to Phosphotyrosine. Phosphoserine is present on Ser-216. Thr-218 bears the Phosphothreonine mark.

This sequence belongs to the PsbQ family.

Its subcellular location is the plastid. The protein localises to the chloroplast thylakoid membrane. Functionally, required for photosystem II assembly/stability and photoautotrophic growth under low light conditions. The polypeptide is Oxygen-evolving enhancer protein 3-2, chloroplastic (PSBQ2) (Arabidopsis thaliana (Mouse-ear cress)).